A 225-amino-acid chain; its full sequence is Protein LiaH (225 aa).

Coiled coils occupy residues 58–151 (KKYE…KEHM) and 161–182 (ESAY…IRAN).

Belongs to the PspA/Vipp/IM30 family.

The protein is Protein LiaH (liaH) of Bacillus subtilis (strain 168).